The chain runs to 457 residues: Proton extrusion protein PxcA (457 aa).

Transmembrane regions (helical) follow at residues 239 to 259 (FILL…TFFL), 332 to 352 (INAI…GVVI), 368 to 390 (GILY…DMFV), and 417 to 437 (FNFL…KYWI).

This sequence belongs to the CemA family.

It is found in the cell inner membrane. Required for H(+) efflux immediately after light irradiation to form a rapid H(+) concentration gradient across the thylakoid membranes. Together with PxcL, contributes to transient H(+) uptake following dark to light transition. The chain is Proton extrusion protein PxcA from Gloeothece citriformis (strain PCC 7424) (Cyanothece sp. (strain PCC 7424)).